The following is a 72-amino-acid chain: Translational regulator CsrA (72 aa).

Belongs to the CsrA/RsmA family. In terms of assembly, homodimer; the beta-strands of each monomer intercalate to form a hydrophobic core, while the alpha-helices form wings that extend away from the core.

The protein resides in the cytoplasm. Its function is as follows. A translational regulator that binds mRNA to regulate translation initiation and/or mRNA stability. Usually binds in the 5'-UTR at or near the Shine-Dalgarno sequence preventing ribosome-binding, thus repressing translation. Its main target seems to be the major flagellin gene, while its function is anatagonized by FliW. In Lachnoclostridium phytofermentans (strain ATCC 700394 / DSM 18823 / ISDg) (Clostridium phytofermentans), this protein is Translational regulator CsrA.